The following is a 120-amino-acid chain: Phosphoribosyl-AMP cyclohydrolase (120 aa).

Aspartate 75 provides a ligand contact to Mg(2+). Cysteine 76 contacts Zn(2+). The Mg(2+) site is built by aspartate 77 and aspartate 79. Residues cysteine 92 and cysteine 99 each contribute to the Zn(2+) site.

This sequence belongs to the PRA-CH family. In terms of assembly, homodimer. The cofactor is Mg(2+). Zn(2+) is required as a cofactor.

It localises to the cytoplasm. It carries out the reaction 1-(5-phospho-beta-D-ribosyl)-5'-AMP + H2O = 1-(5-phospho-beta-D-ribosyl)-5-[(5-phospho-beta-D-ribosylamino)methylideneamino]imidazole-4-carboxamide. It participates in amino-acid biosynthesis; L-histidine biosynthesis; L-histidine from 5-phospho-alpha-D-ribose 1-diphosphate: step 3/9. Its function is as follows. Catalyzes the hydrolysis of the adenine ring of phosphoribosyl-AMP. In Methanosarcina mazei (strain ATCC BAA-159 / DSM 3647 / Goe1 / Go1 / JCM 11833 / OCM 88) (Methanosarcina frisia), this protein is Phosphoribosyl-AMP cyclohydrolase.